Here is a 221-residue protein sequence, read N- to C-terminus: Glutathione S-transferase U25 (221 aa).

N-acetylalanine is present on Ala-2. Positions 3–82 (DEVILLDFWP…YIDEVWPSKT (80 aa)) constitute a GST N-terminal domain. Glutathione-binding positions include 13–14 (SM), 39–40 (NK), 53–54 (KI), and 66–67 (ES). Positions 88–208 (DPYQRAQAKF…LPDSEKIIKF (121 aa)) constitute a GST C-terminal domain. At Thr-149 the chain carries Phosphothreonine.

The protein belongs to the GST superfamily. Tau family.

The protein localises to the cytoplasm. Its subcellular location is the cytosol. The enzyme catalyses RX + glutathione = an S-substituted glutathione + a halide anion + H(+). Functionally, may be involved in the conjugation of reduced glutathione to a wide number of exogenous and endogenous hydrophobic electrophiles and have a detoxification role against certain herbicides. This chain is Glutathione S-transferase U25 (GSTU25), found in Arabidopsis thaliana (Mouse-ear cress).